The chain runs to 430 residues: Replication factor C large subunit (430 aa).

75–82 contacts ATP; sequence GPPGTGKT.

The protein belongs to the activator 1 small subunits family. RfcL subfamily. As to quaternary structure, heteromultimer composed of small subunits (RfcS) and large subunits (RfcL).

Functionally, part of the RFC clamp loader complex which loads the PCNA sliding clamp onto DNA. The protein is Replication factor C large subunit of Nanoarchaeum equitans (strain Kin4-M).